Here is a 338-residue protein sequence, read N- to C-terminus: Ketol-acid reductoisomerase (NADP(+)) (338 aa).

The KARI N-terminal Rossmann domain occupies 1–181; that stretch reads MKVYYDKDAD…GGTRGGVIET (181 aa). Residues 24–27, Arg47, and Ser52 contribute to the NADP(+) site; that span reads YGSQ. His107 is an active-site residue. Gly133 is a binding site for NADP(+). A KARI C-terminal knotted domain is found at 182–327; the sequence is TFKEETETDL…SRLRDMMPWI (146 aa). Residues Asp190, Glu194, Glu226, and Glu230 each contribute to the Mg(2+) site. Position 251 (Ser251) interacts with substrate.

It belongs to the ketol-acid reductoisomerase family. The cofactor is Mg(2+).

It catalyses the reaction (2R)-2,3-dihydroxy-3-methylbutanoate + NADP(+) = (2S)-2-acetolactate + NADPH + H(+). The catalysed reaction is (2R,3R)-2,3-dihydroxy-3-methylpentanoate + NADP(+) = (S)-2-ethyl-2-hydroxy-3-oxobutanoate + NADPH + H(+). It functions in the pathway amino-acid biosynthesis; L-isoleucine biosynthesis; L-isoleucine from 2-oxobutanoate: step 2/4. It participates in amino-acid biosynthesis; L-valine biosynthesis; L-valine from pyruvate: step 2/4. Involved in the biosynthesis of branched-chain amino acids (BCAA). Catalyzes an alkyl-migration followed by a ketol-acid reduction of (S)-2-acetolactate (S2AL) to yield (R)-2,3-dihydroxy-isovalerate. In the isomerase reaction, S2AL is rearranged via a Mg-dependent methyl migration to produce 3-hydroxy-3-methyl-2-ketobutyrate (HMKB). In the reductase reaction, this 2-ketoacid undergoes a metal-dependent reduction by NADPH to yield (R)-2,3-dihydroxy-isovalerate. The sequence is that of Ketol-acid reductoisomerase (NADP(+)) from Nitrosomonas eutropha (strain DSM 101675 / C91 / Nm57).